The sequence spans 451 residues: Interferon-related developmental regulator 1 (451 aa).

Residues 1–10 are compositionally biased toward basic residues; sequence MPKNKKRNTP. Residues 1 to 69 form a disordered region; sequence MPKNKKRNTP…PSSFAEDGPE (69 aa). Over residues 23–33 the composition is skewed to low complexity; the sequence is AAAATAATAGG. A compositionally biased stretch (polar residues) spans 49–61; the sequence is ETMSHCSGYSDPS.

The protein belongs to the IFRD family. As to quaternary structure, interacts with PSIP1/LEDGF. Expressed in a variety of tissues.

Functionally, could play a role in regulating gene activity in the proliferative and/or differentiative pathways induced by NGF. May be an autocrine factor that attenuates or amplifies the initial ligand-induced signal. This chain is Interferon-related developmental regulator 1 (IFRD1), found in Homo sapiens (Human).